The following is a 261-amino-acid chain: Undecaprenyl-diphosphatase (261 aa).

Transmembrane regions (helical) follow at residues 1–21 (MTVL…FLPI), 40–60 (GLTF…AYFW), 79–99 (GRLF…GVLF), 106–126 (IFRS…GLWW), 140–160 (VNLF…IPGV), 185–205 (FLMS…ELPL), 210–230 (LAFI…IKFL), and 239–259 (YLLF…VFWL).

This sequence belongs to the UppP family.

It localises to the cell membrane. It carries out the reaction di-trans,octa-cis-undecaprenyl diphosphate + H2O = di-trans,octa-cis-undecaprenyl phosphate + phosphate + H(+). In terms of biological role, catalyzes the dephosphorylation of undecaprenyl diphosphate (UPP). Confers resistance to bacitracin. The sequence is that of Undecaprenyl-diphosphatase from Moorella thermoacetica (strain ATCC 39073 / JCM 9320).